Consider the following 1392-residue polypeptide: MTNEKVWIEKLDNPTLSVLPHDFLRPQQEPYTKQATYSLQLPQLDVPHDSFSNKYAVALSVWAALIYRVTGDDDIVLYIANNKILRFNIQPTWSFNELYSTINNELNKLNSIEANFSFDELAEKIQSCQDLERTPQLFRLAFLENQDFKLDEFKHHLVDFALNLDTSNNAHVLNLIYNSLLYSNERVTIVADQFTQYLTAALSDPSNCITKISLITASSKDSLPDPTKNLGWCDFVGCIHDIFQDNAEAFPERTCVVETPTLNSDKSRSFTYRDINRTSNIVAHYLIKTGIKRGDVVMIYSSRGVDLMVCVMGVLKAGATFSVIDPAYPPARQTIYLGVAKPRGLIVIRAAGQLDQLVEDYINDELEIVSRINSIAIQENGTIEGGKLDNGEDVLAPYDHYKDTRTGVVVGPDSNPTLSFTSGSEGIPKGVLGRHFSLAYYFNWMSKRFNLTENDKFTMLSGIAHDPIQRDMFTPLFLGAQLYVPTQDDIGTPGRLAEWMSKYGCTVTHLTPAMGQLLTAQATTPFPKLHHAFFVGDILTKRDCLRLQTLAENCRIVNMYGTTETQRAVSYFEVKSKNDDPNFLKKLKDVMPAGKGMLNVQLLVVNRNDRTQICGIGEIGEIYVRAGGLAEGYRGLPELNKEKFVNNWFVEKDHWNYLDKDNGEPWRQFWLGPRDRLYRTGDLGRYLPNGDCECCGRADDQVKIRGFRIELGEIDTHISQHPLVRENITLVRKNADNEPTLITFMVPRFDKPDDLSKFQSDVPKEVETDPIVKGLIGYHLLSKDIRTFLKKRLASYAMPSLIVVMDKLPLNPNGKVDKPKLQFPTPKQLNLVAENTVSETDDSQFTNVEREVRDLWLSILPTKPASVSPDDSFFDLGGHSILATKMIFTLKKKLQVDLPLGTIFKYPTIKAFAAEIDRIKSSGGSSQGEVVENVTANYAEDAKKLVETLPSSYPSREYFVEPNSAEGKTTINVFVTGVTGFLGSYILADLLGRSPKNYSFKVFAHVRAKDEEAAFARLQKAGITYGTWNEKFASNIKVVLGDLSKSQFGLSDEKWMDLANTVDIIIHNGALVHWVYPYAKLRDPNVISTINVMSLAAVGKPKFFDFVSSTSTLDTEYYFNLSDKLVSEGKPGILESDDLMNSASGLTGGYGQSKWAAEYIIRRAGERGLRGCIVRPGYVTGASANGSSNTDDFLLRFLKGSVQLGKIPDIENSVNMVPVDHVARVVVATSLNPPKENELAVAQVTGHPRILFKDYLYTLHDYGYDVEIESYSKWKKSLEASVIDRNEENALYPLLHMVLDNLPESTKAPELDDRNAVASLKKDTAWTGVDWSNGIGVTPEEVGIYIAFLNKVGFLPPPTHNDKLPLPSIELTQAQISLVASGAGARGSSAAA.

A Glycyl lysine isopeptide (Lys-Gly) (interchain with G-Cter in ubiquitin) cross-link involves residue lysine 541. The Carrier domain maps to 843–920 (SQFTNVEREV…AFAAEIDRIK (78 aa)). O-(pantetheine 4'-phosphoryl)serine is present on serine 880. Lysine 1276 participates in a covalent cross-link: Glycyl lysine isopeptide (Lys-Gly) (interchain with G-Cter in ubiquitin).

It belongs to the ATP-dependent AMP-binding enzyme family. Pantetheine 4'-phosphate is required as a cofactor.

It carries out the reaction (S)-2-amino-6-oxohexanoate + NADP(+) + H2O = L-2-aminoadipate + NADPH + 2 H(+). The catalysed reaction is (S)-2-amino-6-oxohexanoate + NAD(+) + H2O = L-2-aminoadipate + NADH + 2 H(+). The enzyme catalyses (S)-2-amino-6-oxohexanoate + AMP + diphosphate + NADP(+) = L-2-aminoadipate + ATP + NADPH + H(+). It functions in the pathway amino-acid biosynthesis; L-lysine biosynthesis via AAA pathway; L-lysine from L-alpha-aminoadipate (fungal route): step 1/3. Functionally, catalyzes the activation of alpha-aminoadipate by ATP-dependent adenylation and the reduction of activated alpha-aminoadipate by NADPH. The activated alpha-aminoadipate is bound to the phosphopantheinyl group of the enzyme itself before it is reduced to (S)-2-amino-6-oxohexanoate. The protein is L-2-aminoadipate reductase (LYS2) of Saccharomyces cerevisiae (strain ATCC 204508 / S288c) (Baker's yeast).